We begin with the raw amino-acid sequence, 377 residues long: Tubulin--tyrosine ligase (377 aa).

In terms of domain architecture, TTL spans 3–370 (TFVVRQENSS…PPDTEQVPQQ (368 aa)).

This sequence belongs to the tubulin--tyrosine ligase family. As to quaternary structure, monomer. The cofactor is Mg(2+). K(+) serves as cofactor.

It catalyses the reaction C-terminal L-alpha-aminoacyl-L-glutamyl-L-glutamyl-[tubulin] + L-tyrosine + ATP = C-terminal L-alpha-aminoacyl-L-glutamyl-L-glutamyl-L-tyrosyl-[tubulin] + ADP + phosphate + H(+). In terms of biological role, catalyzes the post-translational addition of a tyrosine to the C-terminal end of detyrosinated alpha-tubulin. The polypeptide is Tubulin--tyrosine ligase (Ttl) (Rattus norvegicus (Rat)).